Consider the following 319-residue polypeptide: Tryptophan--tRNA ligase (319 aa).

Residues 8 to 10 and 16 to 17 contribute to the ATP site; these read QPS and GN. A 'HIGH' region motif is present at residues 9-17; the sequence is PSGDLHIGN. Asp-131 serves as a coordination point for L-tryptophan. ATP contacts are provided by residues 143 to 145, Val-182, and 189 to 193; these read GKD and KMSKS. Residues 189 to 193 carry the 'KMSKS' region motif; that stretch reads KMSKS.

It belongs to the class-I aminoacyl-tRNA synthetase family. In terms of assembly, homodimer.

It localises to the cytoplasm. It catalyses the reaction tRNA(Trp) + L-tryptophan + ATP = L-tryptophyl-tRNA(Trp) + AMP + diphosphate + H(+). Functionally, catalyzes the attachment of tryptophan to tRNA(Trp). The polypeptide is Tryptophan--tRNA ligase (Campylobacter jejuni subsp. jejuni serotype O:2 (strain ATCC 700819 / NCTC 11168)).